The primary structure comprises 499 residues: Cytochrome P450 71A27 (499 aa).

The chain crosses the membrane as a helical span at residues 3–23; that stretch reads MILISLCLTTLLAFLFLKPLL. Cys438 is a heme binding site.

This sequence belongs to the cytochrome P450 family. It depends on heme as a cofactor.

It localises to the membrane. The polypeptide is Cytochrome P450 71A27 (CYP71A27) (Arabidopsis thaliana (Mouse-ear cress)).